Reading from the N-terminus, the 314-residue chain is Serine hydrolase-like protein 2 (314 aa).

The 261-residue stretch at 33 to 293 folds into the AB hydrolase-1 domain; it reads PPVLCLHGWL…GNHCVHMSEP (261 aa). The active site involves Ser108.

This sequence belongs to the AB hydrolase superfamily.

Its subcellular location is the cytoplasm. The protein localises to the perinuclear region. It localises to the peroxisome. Functionally, probable serine hydrolase. May be related to cell muscle hypertrophy. This chain is Serine hydrolase-like protein 2 (SERHL2), found in Homo sapiens (Human).